Consider the following 394-residue polypeptide: Chorismate synthase (394 aa).

2 residues coordinate NADP(+): Arg-40 and Arg-46. FMN-binding positions include 135–137 and 255–256; these read RAS and QA. Residues 270–291 form a disordered region; it reads RRRGSGAHDEIEPAGAGSRRVR. FMN-binding positions include Gly-302, 317–321, and Arg-343; that span reads KPISS.

Belongs to the chorismate synthase family. Homotetramer. FMNH2 is required as a cofactor.

The enzyme catalyses 5-O-(1-carboxyvinyl)-3-phosphoshikimate = chorismate + phosphate. It functions in the pathway metabolic intermediate biosynthesis; chorismate biosynthesis; chorismate from D-erythrose 4-phosphate and phosphoenolpyruvate: step 7/7. In terms of biological role, catalyzes the anti-1,4-elimination of the C-3 phosphate and the C-6 proR hydrogen from 5-enolpyruvylshikimate-3-phosphate (EPSP) to yield chorismate, which is the branch point compound that serves as the starting substrate for the three terminal pathways of aromatic amino acid biosynthesis. This reaction introduces a second double bond into the aromatic ring system. The polypeptide is Chorismate synthase (Frankia casuarinae (strain DSM 45818 / CECT 9043 / HFP020203 / CcI3)).